The following is a 468-amino-acid chain: Beta-amylase (468 aa).

The signal sequence occupies residues 1–36; that stretch reads MTLYRSLWKKGCMLLLSLVLSLTAFIGSPSNTASAA. Aspartate 76 contributes to the substrate binding site. The Ca(2+) site is built by glutamate 83 and aspartate 87. 2 residues coordinate substrate: histidine 116 and aspartate 124. Cysteine 118 and cysteine 126 are oxidised to a cystine. Glutamate 170 lines the Ca(2+) pocket. The active-site Proton donor is glutamate 198. Lysine 314, histidine 319, and threonine 357 together coordinate substrate. Glutamate 394 serves as the catalytic Proton acceptor. Substrate is bound by residues 395–396 and arginine 423; that span reads NA.

Belongs to the glycosyl hydrolase 14 family. Ca(2+) is required as a cofactor.

The catalysed reaction is Hydrolysis of (1-&gt;4)-alpha-D-glucosidic linkages in polysaccharides so as to remove successive maltose units from the non-reducing ends of the chains.. The chain is Beta-amylase from Cytobacillus firmus (Bacillus firmus).